We begin with the raw amino-acid sequence, 537 residues long: Prolyl 4-hydroxylase subunit alpha-2 (537 aa).

A signal peptide spans 1-23 (MKLQVLVLVLLMSWFGVLSWVQA). N-linked (GlcNAc...) asparagine glycosylation occurs at N117. A TPR repeat occupies 209 to 242 (SLVLDYLSYAVFQLGDLHRAVELTRRLLSLDPSH). An N-linked (GlcNAc...) asparagine glycan is attached at N266. Positions 414–522 (TAELLQVANY…KWVSNKWFHE (109 aa)) constitute a Fe2OG dioxygenase domain. The Fe cation site is built by H432 and D434. K482 carries the N6-succinyllysine modification. H503 is a binding site for Fe cation. K513 is a binding site for 2-oxoglutarate.

Belongs to the P4HA family. Heterotetramer of two alpha-2 chains and two beta chains (P4HB) (the beta chain is the multi-functional PDI), where P4HB plays the role of a structural subunit; this tetramer catalyzes the formation of 4-hydroxyproline in collagen. It depends on Fe(2+) as a cofactor. The cofactor is L-ascorbate. Expressed at least in brain, heart and lung.

It is found in the endoplasmic reticulum lumen. The enzyme catalyses L-prolyl-[collagen] + 2-oxoglutarate + O2 = trans-4-hydroxy-L-prolyl-[collagen] + succinate + CO2. Inhibited by poly(L-proline) only at very high concentrations. Its function is as follows. Catalyzes the post-translational formation of 4-hydroxyproline in -Xaa-Pro-Gly- sequences in collagens and other proteins. In Mus musculus (Mouse), this protein is Prolyl 4-hydroxylase subunit alpha-2 (P4ha2).